Consider the following 492-residue polypeptide: GTPase Obg (492 aa).

The Obg domain occupies 2–159; sequence PRFVDRVVIH…RELTLELKTV (158 aa). The 181-residue stretch at 160-340 folds into the OBG-type G domain; the sequence is ADVGLIGFPS…LIFGLWQMIS (181 aa). GTP is bound by residues 166-173, 191-195, 212-215, 292-295, and 321-323; these read GFPSAGKS, FTTLV, DVPG, NKID, and STV. Residues Ser173 and Thr193 each coordinate Mg(2+). The OCT domain maps to 358-438; the sequence is PVPVDDSGFR…IGDMTFDWEP (81 aa). The disordered stretch occupies residues 441–492; sequence PAGQQVVLSGRGTDARLERTERVGAAERKAARRQRRTGDDAERGTTERGENT. Basic and acidic residues-rich tracts occupy residues 453-469 and 476-492; these read TDAR…AERK and RTGD…GENT.

It belongs to the TRAFAC class OBG-HflX-like GTPase superfamily. OBG GTPase family. As to quaternary structure, monomer. The cofactor is Mg(2+).

The protein resides in the cytoplasm. Functionally, an essential GTPase which binds GTP, GDP and possibly (p)ppGpp with moderate affinity, with high nucleotide exchange rates and a fairly low GTP hydrolysis rate. Plays a role in control of the cell cycle, stress response, ribosome biogenesis and in those bacteria that undergo differentiation, in morphogenesis control. In Mycolicibacterium paratuberculosis (strain ATCC BAA-968 / K-10) (Mycobacterium paratuberculosis), this protein is GTPase Obg.